The primary structure comprises 110 residues: Large ribosomal subunit protein uL22 (110 aa).

Belongs to the universal ribosomal protein uL22 family. In terms of assembly, part of the 50S ribosomal subunit.

This protein binds specifically to 23S rRNA; its binding is stimulated by other ribosomal proteins, e.g. L4, L17, and L20. It is important during the early stages of 50S assembly. It makes multiple contacts with different domains of the 23S rRNA in the assembled 50S subunit and ribosome. In terms of biological role, the globular domain of the protein is located near the polypeptide exit tunnel on the outside of the subunit, while an extended beta-hairpin is found that lines the wall of the exit tunnel in the center of the 70S ribosome. The sequence is that of Large ribosomal subunit protein uL22 from Buchnera aphidicola subsp. Schizaphis graminum (strain Sg).